The following is a 366-amino-acid chain: Chitoporin (366 aa).

The first 23 residues, 1-23, serve as a signal peptide directing secretion; that stretch reads MDKMFKRTVIGAAVALASTGLMA.

This sequence belongs to the Gram-negative porin family.

The protein localises to the cell outer membrane. In terms of biological role, involved in the uptake of chitosugars. This chain is Chitoporin (chiP), found in Vibrio furnissii.